Reading from the N-terminus, the 691-residue chain is Glycine--tRNA ligase beta subunit (691 aa).

This sequence belongs to the class-II aminoacyl-tRNA synthetase family. In terms of assembly, tetramer of two alpha and two beta subunits.

The protein localises to the cytoplasm. The enzyme catalyses tRNA(Gly) + glycine + ATP = glycyl-tRNA(Gly) + AMP + diphosphate. This Limosilactobacillus reuteri (strain DSM 20016) (Lactobacillus reuteri) protein is Glycine--tRNA ligase beta subunit.